The chain runs to 278 residues: MITGRTALYGVVGHPVAHSRSPEMQNAAFAKLGVDAAYVALPVAPERIDEALRGAHALGFQGLNVTVPHKPRAASLCHALDPVATAVGAANTLRRTRDGWEGFNTDAPACRTLLEAAGVARGARALLVGAGGAARAAAWALLQLGTELRVAARREEAAAELCRDLAAAVPGADAATADFEDLEAEADAAAVVVNGTSVELPGHEGRLPPLRFRADQVVLDFVYGDTELARAARAGGARLVTGEQVLVRQGALAFTIWTGLPAPEADMARALEAREGAR.

Residues 19 to 21 (SRS) and threonine 66 each bind shikimate. Catalysis depends on lysine 70, which acts as the Proton acceptor. Shikimate is bound by residues asparagine 91 and aspartate 106. Residues 129–133 (GAGGA) and phenylalanine 221 contribute to the NADP(+) site. Tyrosine 223 is a shikimate binding site. Glycine 242 is a binding site for NADP(+).

It belongs to the shikimate dehydrogenase family. As to quaternary structure, homodimer.

The enzyme catalyses shikimate + NADP(+) = 3-dehydroshikimate + NADPH + H(+). It participates in metabolic intermediate biosynthesis; chorismate biosynthesis; chorismate from D-erythrose 4-phosphate and phosphoenolpyruvate: step 4/7. Functionally, involved in the biosynthesis of the chorismate, which leads to the biosynthesis of aromatic amino acids. Catalyzes the reversible NADPH linked reduction of 3-dehydroshikimate (DHSA) to yield shikimate (SA). The chain is Shikimate dehydrogenase (NADP(+)) from Anaeromyxobacter dehalogenans (strain 2CP-C).